Reading from the N-terminus, the 354-residue chain is Endo-1,4-beta-xylanase 1 (354 aa).

Residues 19–339 (SGLDAAMKAA…KPSYTSSLNT (321 aa)) form the GH10 domain. An N-linked (GlcNAc...) asparagine glycan is attached at Asn117. The Proton donor role is filled by Glu147. Residue Glu261 is the Nucleophile of the active site. An intrachain disulfide couples Cys289 to Cys295.

It belongs to the glycosyl hydrolase 10 (cellulase F) family.

It is found in the secreted. The enzyme catalyses Endohydrolysis of (1-&gt;4)-beta-D-xylosidic linkages in xylans.. Its pathway is glycan degradation; xylan degradation. In terms of biological role, endo-1,4-beta-xylanase involved in the hydrolysis of xylan, a major structural heterogeneous polysaccharide found in plant biomass representing the second most abundant polysaccharide in the biosphere, after cellulose. Plays an important role in causing fusarium head blight (FHB) on cereal crops. In Gibberella zeae (strain ATCC MYA-4620 / CBS 123657 / FGSC 9075 / NRRL 31084 / PH-1) (Wheat head blight fungus), this protein is Endo-1,4-beta-xylanase 1 (XYL1).